The sequence spans 286 residues: Aminoglycoside N(3)-acetyltransferase III (286 aa).

It belongs to the antibiotic N-acetyltransferase family.

The catalysed reaction is a 2-deoxystreptamine antibiotic + acetyl-CoA = an N(3)-acetyl-2-deoxystreptamine antibiotic + CoA + H(+). In terms of biological role, resistance to antibiotics containing the 2-deoxy-streptamine ring including gentamicin, kanamycin, tobramycin, neomycin and apramycin. The protein is Aminoglycoside N(3)-acetyltransferase III (aacC3) of Salmonella sp.